A 1343-amino-acid polypeptide reads, in one-letter code: DNA-directed RNA polymerase subunit beta (1343 aa).

This sequence belongs to the RNA polymerase beta chain family. As to quaternary structure, the RNAP catalytic core consists of 2 alpha, 1 beta, 1 beta' and 1 omega subunit. When a sigma factor is associated with the core the holoenzyme is formed, which can initiate transcription.

The enzyme catalyses RNA(n) + a ribonucleoside 5'-triphosphate = RNA(n+1) + diphosphate. In terms of biological role, DNA-dependent RNA polymerase catalyzes the transcription of DNA into RNA using the four ribonucleoside triphosphates as substrates. This is DNA-directed RNA polymerase subunit beta from Haemophilus influenzae (strain 86-028NP).